The chain runs to 229 residues: Thiamine import ATP-binding protein ThiQ (229 aa).

The ABC transporter domain occupies 2-229 (LHLENIRVRQ…NNAEPLRPWM (228 aa)). 32–39 (GASGSGKS) contacts ATP.

The protein belongs to the ABC transporter superfamily. Thiamine importer (TC 3.A.1.19.1) family. The complex is composed of two ATP-binding proteins (ThiQ), two transmembrane proteins (ThiP) and a solute-binding protein (ThiB).

It localises to the cell inner membrane. It catalyses the reaction thiamine(out) + ATP + H2O = thiamine(in) + ADP + phosphate + H(+). Functionally, part of the ABC transporter complex ThiBPQ involved in thiamine import. Responsible for energy coupling to the transport system. The protein is Thiamine import ATP-binding protein ThiQ of Jannaschia sp. (strain CCS1).